Reading from the N-terminus, the 401-residue chain is Argininosuccinate synthase (401 aa).

9–17 (AYSGGLDTS) lines the ATP pocket. Tyrosine 86 provides a ligand contact to L-citrulline. Residue glycine 116 participates in ATP binding. 3 residues coordinate L-aspartate: threonine 118, asparagine 122, and aspartate 123. Asparagine 122 contacts L-citrulline. Residues arginine 126, serine 174, serine 183, glutamate 259, and tyrosine 271 each coordinate L-citrulline.

It belongs to the argininosuccinate synthase family. Type 1 subfamily. As to quaternary structure, homotetramer.

The protein localises to the cytoplasm. The catalysed reaction is L-citrulline + L-aspartate + ATP = 2-(N(omega)-L-arginino)succinate + AMP + diphosphate + H(+). It participates in amino-acid biosynthesis; L-arginine biosynthesis; L-arginine from L-ornithine and carbamoyl phosphate: step 2/3. This Bacillus cereus (strain AH187) protein is Argininosuccinate synthase.